Here is a 461-residue protein sequence, read N- to C-terminus: Steroidogenic factor 1 (461 aa).

Positions 10 to 85 (DELCPVCGDK…VGMRLEAVRA (76 aa)) form a DNA-binding region, nuclear receptor. An NR C4-type zinc finger spans residues 13-33 (CPVCGDKVSGYHYGLLTCESC). 3 positions are modified to N6-acetyllysine: Lys34, Lys38, and Lys72. The NR C4-type zinc-finger motif lies at 49–73 (CTESQSCKIDKTQRKRCPFCRFQKC). Residue Lys119 forms a Glycyl lysine isopeptide (Lys-Gly) (interchain with G-Cter in SUMO) linkage. The segment at 119-150 (KLETGPPMGVAPPPPPPPDYMLPPGLHAPEPK) is disordered. A compositionally biased stretch (pro residues) spans 127–139 (GVAPPPPPPPDYM). Lys194 participates in a covalent cross-link: Glycyl lysine isopeptide (Lys-Gly) (interchain with G-Cter in SUMO). A Phosphoserine; by CDK7 modification is found at Ser203. One can recognise an NR LBD domain in the interval 222–459 (GVPELIVQLL…NLLIEMLQAK (238 aa)). Residues 230–461 (LLQLEPDEDQ…LIEMLQAKQT (232 aa)) are important for dimerization. Gly341, Tyr436, and Lys440 together coordinate a 1,2-diacyl-sn-glycero-3-phosphocholine.

This sequence belongs to the nuclear hormone receptor family. NR5 subfamily. As to quaternary structure, binds DNA as a monomer. Part of a complex consisting of SFPQ, NONO and NR5A1. Interacts with NR0B2, NCOA2 and PPARGC1A. Interacts with DGKQ and CDK7. Binds to and activated by HIPK3. Acetylation stimulates the transcriptional activity. In terms of processing, sumoylation reduces CDK7-mediated phosphorylation on Ser-203. Post-translationally, phosphorylated on Ser-203 by CDK7. This phosphorylation promotes transcriptional activity.

It localises to the nucleus. In terms of biological role, transcriptional activator. Seems to be essential for sexual differentiation and formation of the primary steroidogenic tissues. Binds to the Ad4 site found in the promoter region of steroidogenic P450 genes such as CYP11A, CYP11B and CYP21B. Also regulates the AMH/Muellerian inhibiting substance gene as well as the AHCH and STAR genes. 5'-YCAAGGYC-3' and 5'-RRAGGTCA-3' are the consensus sequences for the recognition by NR5A1. The SFPQ-NONO-NR5A1 complex binds to the CYP17 promoter and regulates basal and cAMP-dependent transcriptional activity. Binds phosphatidylcholine and phospholipids with a phosphatidylinositol (PI) headgroup, in particular PI(3,4)P2 and PI(3,4,5)P3. Activated by the phosphorylation of NR5A1 by HIPK3 leading to increased steroidogenic gene expression upon cAMP signaling pathway stimulation. The protein is Steroidogenic factor 1 (NR5A1) of Sus scrofa (Pig).